Consider the following 318-residue polypeptide: Ribosome biogenesis protein RLP7 (318 aa).

Disordered regions lie at residues 1–49 and 101–121; these read MSQP…NRFV and AGSKATSESELQDVDEEDEED. Basic and acidic residues predominate over residues 19–40; sequence ADRTRLEKQELAKKRKEQEEKQ. The span at 110 to 121 shows a compositional bias: acidic residues; the sequence is ELQDVDEEDEED.

The protein belongs to the universal ribosomal protein uL30 family.

It localises to the nucleus. Its subcellular location is the nucleolus. Functionally, involved in the biogenesis of the 60S ribosomal subunit. May act as a specificity factor that binds precursor rRNAs and tethers the enzymes that carry out the early 5' to 3' exonucleolytic reactions that generate the mature rRNAs. The sequence is that of Ribosome biogenesis protein RLP7 (RLP7) from Kluyveromyces lactis (strain ATCC 8585 / CBS 2359 / DSM 70799 / NBRC 1267 / NRRL Y-1140 / WM37) (Yeast).